The primary structure comprises 542 residues: TOM1-like protein 7 (542 aa).

A VHS domain is found at 29-158 (ATSELLRTPD…ELKRCGVKFP (130 aa)). A Phosphoserine modification is found at Ser161. The 89-residue stretch at 201 to 289 (EIESLSLSSL…VLARHDAIAS (89 aa)) folds into the GAT domain. The segment at 303–340 (RETSSSLKTCGAAALESADSESSSSSSSSESETDEVED) is disordered. Over residues 314 to 332 (AAALESADSESSSSSSSSE) the composition is skewed to low complexity. Phosphoserine is present on Ser521. The tract at residues 522 to 542 (FPARATGTSGAATAATVDRQP) is disordered. Over residues 524 to 542 (ARATGTSGAATAATVDRQP) the composition is skewed to low complexity.

The protein belongs to the TOM1 family. As to expression, preferentially expressed in flowers.

The protein localises to the membrane. In terms of biological role, might contribute to the loading of the ESCRT machinery. The polypeptide is TOM1-like protein 7 (Arabidopsis thaliana (Mouse-ear cress)).